A 91-amino-acid polypeptide reads, in one-letter code: UPF0250 protein NMA1380 (91 aa).

It belongs to the UPF0250 family.

The polypeptide is UPF0250 protein NMA1380 (Neisseria meningitidis serogroup A / serotype 4A (strain DSM 15465 / Z2491)).